Reading from the N-terminus, the 122-residue chain is Large ribosomal subunit protein uL14 (122 aa).

This sequence belongs to the universal ribosomal protein uL14 family. Part of the 50S ribosomal subunit. Forms a cluster with proteins L3 and L19. In the 70S ribosome, L14 and L19 interact and together make contacts with the 16S rRNA in bridges B5 and B8.

Functionally, binds to 23S rRNA. Forms part of two intersubunit bridges in the 70S ribosome. The chain is Large ribosomal subunit protein uL14 from Clostridium perfringens (strain ATCC 13124 / DSM 756 / JCM 1290 / NCIMB 6125 / NCTC 8237 / Type A).